The primary structure comprises 391 residues: Na(+)/H(+) antiporter NhaA (391 aa).

12 helical membrane passes run 9–29, 36–56, 59–79, 95–115, 123–143, 154–174, 177–197, 213–235, 259–279, 293–313, 329–349, and 364–384; these read FQLE…ALII, YLYS…LNIA, LLLW…GLEV, ILPA…YWFI, VAGW…VLAL, LFLM…IALF, GTLS…LIAM, LILW…ALAL, WVAY…SLAG, IAVG…WLAV, ILGV…VGSL, and MGIL…TAMA.

This sequence belongs to the NhaA Na(+)/H(+) (TC 2.A.33) antiporter family.

It localises to the cell inner membrane. The catalysed reaction is Na(+)(in) + 2 H(+)(out) = Na(+)(out) + 2 H(+)(in). Its function is as follows. Na(+)/H(+) antiporter that extrudes sodium in exchange for external protons. The chain is Na(+)/H(+) antiporter NhaA from Pseudomonas putida (strain GB-1).